A 164-amino-acid chain; its full sequence is Axial regulator YABBY 5 (164 aa).

The C4-type zinc-finger motif lies at 16-43 (CNFCNIILAVNVPCSSLFDIVTVRCGHC).

Belongs to the YABBY family. Binds to LUG and LUH; these complexes promote adaxial cell identity in leaves as well as embryonic shoot apical meristem (SAM) initiation and postembryonic SAM maintenance. Interacts with SPL/NZZ and SPEAR2.

It is found in the nucleus. Promotes adaxial cell identity. Regulates the initiation of embryonic shoot apical meristem (SAM) development. The sequence is that of Axial regulator YABBY 5 (YAB5) from Arabidopsis thaliana (Mouse-ear cress).